The chain runs to 287 residues: Nucleoid occlusion protein (287 aa).

A DNA-binding region (H-T-H motif) is located at residues 146–165 (EALAQRVGKSQSAIANKMRL).

This sequence belongs to the ParB family.

It is found in the cytoplasm. The protein resides in the nucleoid. In terms of biological role, effects nucleoid occlusion by binding relatively nonspecifically to DNA and preventing the assembly of the division machinery in the vicinity of the nucleoid, especially under conditions that disturb the cell cycle. It helps to coordinate cell division and chromosome segregation by preventing the formation of the Z ring through the nucleoid, which would cause chromosome breakage. This chain is Nucleoid occlusion protein, found in Listeria monocytogenes serotype 4a (strain HCC23).